The primary structure comprises 600 residues: Novobiocin biosynthesis protein H (600 aa).

Residues 505 to 526 (GGKTDRAGLPDPVKATQPAGLG) are disordered. Residues 526–600 (GPRTPAEKVL…QLAAIATLEE (75 aa)) enclose the Carrier domain. S561 carries the post-translational modification O-(pantetheine 4'-phosphoryl)serine.

It belongs to the ATP-dependent AMP-binding enzyme family.

It participates in antibiotic biosynthesis; novobiocin biosynthesis. Its function is as follows. Together with NovI, involved in the formation of a beta-OH-Tyr intermediate in the novobiocin biosynthesis pathway, an aminocoumarin family antibiotic that targets bacterial DNA gyrases. The ATP-dependent AMP-binding region activates L-Tyr as L-tyrosyl-AMP and then transfers the L-tyrosyl group to the acyl carrier domain through thioester formation to form a tyrosyl-S intermediate that is covalently tethered to NovH (L-Tyr-S-NovH). In Streptomyces niveus (Streptomyces spheroides), this protein is Novobiocin biosynthesis protein H (novH).